Here is a 265-residue protein sequence, read N- to C-terminus: Transcriptional repressor DcmR (265 aa).

Residues 17-36 constitute a DNA-binding region (H-T-H motif); the sequence is LDIKQAASLLNVSEASLRRW.

Monomer.

In terms of biological role, transcriptional repressor of the dcmA gene and of its own gene. This is Transcriptional repressor DcmR (dcmR) from Methylorubrum extorquens (strain DSM 6343 / CIP 106787 / DM4) (Methylobacterium extorquens).